Reading from the N-terminus, the 264-residue chain is RNA-binding protein pos-1 (264 aa).

The segment at Gln-56–Pro-82 is disordered. A compositionally biased stretch (polar residues) spans Gln-61–Ala-74. 2 C3H1-type zinc fingers span residues Ala-98–His-126 and Lys-141–Val-169. The Zn(2+) site is built by Cys-104, Cys-113, Cys-119, His-123, Cys-147, Cys-156, Cys-162, and His-166.

As to quaternary structure, monomer.

It localises to the cytoplasm. Functionally, RNA-binding protein that coordinates cell fate specification and differentiation during early embryogenesis. Binds to a consensus pos-1 recognition element (PRE) consisting of the sequence 5'-UA(U 2-3)RGD(N 1-3)G-3', where R is any purine, D is A, G, or U, and N is any base. The PRE motif is found within the 3' untranslated region of many maternal transcripts required for early development. Binds to the 3' untranslated region (UTR) of Notch receptor homolog glp-1, thereby repressing glp-1 translation in the posterior blastomeres in the embryo. Binding to glp-1 3' UTR excludes cell fate regulator gld-1 binding to an overlapping binding site in the glp-1 3' UTR. Binds to the neg-1 3'UTR thereby opposing neg-1 expression and cytoplasmic polyadenylation of the neg-1 mRNA poly(A) tail promoted by gld-2 and gld-3. By inhibiting the cytoplasmic lengthening of neg-1 mRNA, restricts the accumulation of neg-1 protein and promotes endo-mesoderm development in anterior blastomeres. Essential for germline specification. The polypeptide is RNA-binding protein pos-1 (Caenorhabditis elegans).